The following is a 748-amino-acid chain: Polyribonucleotide nucleotidyltransferase (748 aa).

Mg(2+) contacts are provided by aspartate 487 and aspartate 493. A KH domain is found at 554 to 613; the sequence is PSTTTIKIDKDKIRDIIGPGGKVIKEICETSGAKIDISDDGTVSVYASDRDKLKVALDKI. The region spanning 623-691 is the S1 motif domain; the sequence is GEIFNGTVVK…NKGKAKLTIK (69 aa). The interval 691–748 is disordered; sequence KNADKDKSSNNTKPKTNVNNTKDNSEPEQRRDSSKKRAWNEDNNAETAEVITERKYFN. A compositionally biased stretch (low complexity) spans 699–712; sequence SNNTKPKTNVNNTK. Over residues 713-722 the composition is skewed to basic and acidic residues; that stretch reads DNSEPEQRRD.

The protein belongs to the polyribonucleotide nucleotidyltransferase family. It depends on Mg(2+) as a cofactor.

It is found in the cytoplasm. It carries out the reaction RNA(n+1) + phosphate = RNA(n) + a ribonucleoside 5'-diphosphate. In terms of biological role, involved in mRNA degradation. Catalyzes the phosphorolysis of single-stranded polyribonucleotides processively in the 3'- to 5'-direction. This chain is Polyribonucleotide nucleotidyltransferase, found in Rickettsia africae (strain ESF-5).